The following is a 415-amino-acid chain: Homoserine O-succinyltransferase (415 aa).

The 315-residue stretch at 69–383 (NAVLVCHALN…PHGHDAFLLD (315 aa)) folds into the AB hydrolase-1 domain. S175 (nucleophile) is an active-site residue. R245 lines the substrate pocket. Active-site residues include D344 and H377. Residue D378 coordinates substrate.

It belongs to the AB hydrolase superfamily. MetX family. Homodimer.

Its subcellular location is the cytoplasm. The catalysed reaction is L-homoserine + succinyl-CoA = O-succinyl-L-homoserine + CoA. It functions in the pathway amino-acid biosynthesis; L-methionine biosynthesis via de novo pathway; O-succinyl-L-homoserine from L-homoserine: step 1/1. Functionally, transfers a succinyl group from succinyl-CoA to L-homoserine, forming succinyl-L-homoserine. The sequence is that of Homoserine O-succinyltransferase from Bordetella pertussis (strain Tohama I / ATCC BAA-589 / NCTC 13251).